The sequence spans 620 residues: Probable translation initiation factor IF-2 (620 aa).

A compositionally biased stretch (acidic residues) spans Met-1–Thr-10. A disordered region spans residues Met-1–Asp-29. A compositionally biased stretch (low complexity) spans Asp-11–Asp-29. The tr-type G domain maps to Leu-33–Met-248. The tract at residues Gly-42–Thr-49 is G1. Gly-42–Thr-49 contributes to the GTP binding site. Residues Ala-67–His-71 form a G2 region. A G3 region spans residues Asp-104–Gly-107. Residues Asp-104–His-108 and Asn-158–Asp-161 contribute to the GTP site. Residues Asn-158–Asp-161 are G4. The span at Thr-162 to Ser-183 shows a compositional bias: polar residues. The interval Thr-162–Ala-185 is disordered. The tract at residues Ser-226–Ile-228 is G5.

It belongs to the TRAFAC class translation factor GTPase superfamily. Classic translation factor GTPase family. IF-2 subfamily.

Function in general translation initiation by promoting the binding of the formylmethionine-tRNA to ribosomes. Seems to function along with eIF-2. The sequence is that of Probable translation initiation factor IF-2 from Haloquadratum walsbyi (strain DSM 16790 / HBSQ001).